Reading from the N-terminus, the 490-residue chain is Phosphoglucosamine mutase (490 aa).

The active-site Phosphoserine intermediate is the serine 139. 4 residues coordinate Mg(2+): serine 139, aspartate 279, aspartate 281, and aspartate 283. Residue serine 139 is modified to Phosphoserine.

Belongs to the phosphohexose mutase family. The cofactor is Mg(2+). In terms of processing, activated by phosphorylation.

The enzyme catalyses alpha-D-glucosamine 1-phosphate = D-glucosamine 6-phosphate. Functionally, catalyzes the conversion of glucosamine-6-phosphate to glucosamine-1-phosphate. This chain is Phosphoglucosamine mutase, found in Nostoc sp. (strain PCC 7120 / SAG 25.82 / UTEX 2576).